The primary structure comprises 115 residues: Large ribosomal subunit protein bL19 (115 aa).

It belongs to the bacterial ribosomal protein bL19 family.

In terms of biological role, this protein is located at the 30S-50S ribosomal subunit interface and may play a role in the structure and function of the aminoacyl-tRNA binding site. This is Large ribosomal subunit protein bL19 from Erwinia tasmaniensis (strain DSM 17950 / CFBP 7177 / CIP 109463 / NCPPB 4357 / Et1/99).